Consider the following 170-residue polypeptide: Cathelicidin antimicrobial peptide (170 aa).

Positions M1 to A30 are cleaved as a signal peptide. Residues Q31–R131 constitute a propeptide, cathelin-like domain (CLD). Disulfide bonds link C86/C97 and C108/C125. Residues F150 to Q162 are active core.

The protein belongs to the cathelicidin family. Monomer, homodimer or homotrimer (in vitro). Oligomerizes as tetra- or hexamer in solution (in vitro). In terms of processing, proteolytically cleaved by proteinase PRTN3 into antibacterial peptide LL-37. Proteolytically cleaved by cathepsin CTSG and neutrophil elastase ELANE. Post-translationally, resistant to proteolytic degradation in solution, and when bound to both zwitterionic (mimicking mammalian membranes) and negatively charged membranes (mimicking bacterial membranes). After secretion onto the skin surface, the CAMP gene product is processed by a serine protease-dependent mechanism into multiple novel antimicrobial peptides distinct from and shorter than cathelicidin LL-37. These peptides show enhanced antimicrobial action, acquiring the ability to kill skin pathogens such as S.aureus, E.coli and C.albicans. These peptides have lost the ability to stimulate CXCL8/IL8 release from keratinocytes. The peptides act synergistically, killing bacteria at lower concentrations when present together, and maintain activity at increased salt condition.

It is found in the secreted. The protein localises to the vesicle. Antimicrobial protein that is an integral component of the innate immune system. Binds to bacterial lipopolysaccharides (LPS). Acts via neutrophil N-formyl peptide receptors to enhance the release of CXCL2. Postsecretory processing generates multiple cathelicidin antimicrobial peptides with various lengths which act as a topical antimicrobial defense in sweat on skin. The unprocessed precursor form, cathelicidin antimicrobial peptide, inhibits the growth of Gram-negative E.coli and E.aerogenes with efficiencies comparable to that of the mature peptide LL-37 (in vitro). In terms of biological role, antimicrobial peptide that is an integral component of the innate immune system. Binds to bacterial lipopolysaccharides (LPS). Causes membrane permeabilization by forming transmembrane pores (in vitro). Causes lysis of E.coli. Exhibits antimicrobial activity against Gram-negative bacteria such as P.aeruginosa, S.typhimurium, E.aerogenes, E.coli and P.syringae, Gram-positive bacteria such as L.monocytogenes, S.epidermidis, S.pyogenes and S.aureus, as well as vancomycin-resistant enterococci (in vitro). Exhibits antimicrobial activity against methicillin-resistant S.aureus, P.mirabilis, and C.albicans in low-salt media, but not in media containing 100 mM NaCl (in vitro). Forms chiral supramolecular assemblies with quinolone signal (PQS) molecules of P.aeruginosa, which may lead to interference of bacterial quorum signaling and perturbance of bacterial biofilm formation. May form supramolecular fiber-like assemblies on bacterial membranes. Induces cytokine and chemokine producation as well as TNF/TNFA and CSF2/GMCSF production in normal human keratinocytes. Exhibits hemolytic activity against red blood cells. Functionally, exhibits antimicrobial activity against E.coli and B.megaterium (in vitro). This Nomascus leucogenys (Northern white-cheeked gibbon) protein is Cathelicidin antimicrobial peptide.